We begin with the raw amino-acid sequence, 464 residues long: UNC93-like protein 3 (464 aa).

The next 11 membrane-spanning stretches (helical) occupy residues 31–51 (VHIL…AQNL), 62–82 (ISLG…SLVV), 84–104 (LMGS…FVAA), 110–130 (WFTM…IWVG), 160–180 (EFWA…LALL), 192–212 (TLLM…MFFI), 251–271 (LLIV…WAEF), 275–295 (IVTP…YGAL), 313–333 (ITFI…WLLL), 341–361 (VLGT…DGIL), and 392–412 (IAIV…IVML).

The protein belongs to the unc-93 family.

Its subcellular location is the membrane. The polypeptide is UNC93-like protein 3 (Arabidopsis thaliana (Mouse-ear cress)).